Consider the following 553-residue polypeptide: Transmembrane protein DDB_G0292058 (553 aa).

A signal peptide spans 1–26; the sequence is MIKINKILSLLIILLIINCNYQFVKA. A run of 2 helical transmembrane segments spans residues 80 to 100 and 137 to 157; these read ILLSGITFIIAAITLIFGIIF and VFILKLVTLIMVAGCVAVFIT. Residues Asn-162, Asn-171, Asn-178, and Asn-195 are each glycosylated (N-linked (GlcNAc...) asparagine). Helical transmembrane passes span 243–263 and 274–294; these read IIIVGLVFCMVVAGLIGVSAL and SIALVILIPFMWIVFSVHYPI. Residues Asn-315, Asn-332, Asn-351, Asn-396, Asn-405, and Asn-462 are each glycosylated (N-linked (GlcNAc...) asparagine). A helical membrane pass occupies residues 515–535; the sequence is LLIAPTAVFAILLTGLGITGI.

Its subcellular location is the membrane. The protein is Transmembrane protein DDB_G0292058 of Dictyostelium discoideum (Social amoeba).